Reading from the N-terminus, the 461-residue chain is Ribonuclease inhibitor (461 aa).

S2 carries the post-translational modification N-acetylserine. The tract at residues 2-11 (SLDIQSLDIQ) is 2 X 5 AA tandem repeats of S-L-D-I-Q. 15 LRR repeats span residues 20 to 48 (WAEL…CKDI), 49 to 76 (SSAL…VHCV), 77 to 105 (LQGL…CGVL), 106 to 133 (SSTL…LQLL), 134 to 162 (CEGL…CEPL), 163 to 190 (ASVL…VRVL), 191 to 219 (CQGL…CRDL), 220 to 247 (CGIV…MAEL), 248 to 276 (CPGL…CGDL), 277 to 304 (CRVL…ARLL), 305 to 333 (CETL…CSHF), 334 to 361 (SSVL…VREL), 362 to 390 (CQGL…CSSL), 391 to 418 (AATL…ILQL), and 419 to 447 (VESV…EDRL). The residue at position 82 (T82) is a Phosphothreonine. Position 91 is a phosphoserine (S91).

Forms high-affinity heterodimers with RNASE1, ANG and RNASE2. In terms of processing, the N-terminus is blocked. At least 30 of the 32 cysteine residues are in the reduced form.

It is found in the cytoplasm. The protein localises to the nucleus. Functionally, ribonuclease inhibitor which inhibits RNASE1, RNASE2 and angiogenin (ANG). May play a role in redox homeostasis. Required to inhibit the cytotoxic tRNA ribonuclease activity of ANG in the cytoplasm in absence of stress. Relocates to the nucleus in response to stress, relieving inhibition of ANG in the cytoplasm, and inhibiting the angiogenic activity of ANG in the nucleus. This is Ribonuclease inhibitor from Homo sapiens (Human).